The following is a 326-amino-acid chain: Olfactory receptor 10X1 (326 aa).

Residues 1–41 (MVLNVYCCFFQISDIQTMKINQTILKEFILVGFSVYPHVQT) are Extracellular-facing. N-linked (GlcNAc...) asparagine glycosylation occurs at N21. A helical transmembrane segment spans residues 42 to 62 (FLFVVFFCLYLLTLAGNLIIM). Residues 63-70 (GLTWVDRS) lie on the Cytoplasmic side of the membrane. A helical membrane pass occupies residues 71-91 (LHTPMYLFLSALSFSETCYTL). The Extracellular segment spans residues 92 to 115 (TIVPKMLEDLLAKDRSISVTGCSL). An intrachain disulfide couples C113 to C205. The helical transmembrane segment at 116-136 (QMCFFLGLGGTNCIILTLMGY) threads the bilayer. Residues 137–155 (DRFLAICNPLRYPLLMTNI) are Cytoplasmic-facing. The chain crosses the membrane as a helical span at residues 156–176 (VCGQLVASACTAGFFISLTET). The Extracellular portion of the chain corresponds to 177–213 (ALIFRDSFCRPNLVKHFFCHMLAVIRLSCIDSNHTEF). N209 carries N-linked (GlcNAc...) asparagine glycosylation. A helical membrane pass occupies residues 214–233 (IITLISVSGLLGTLLLIILT). Topologically, residues 234–253 (DVFIISTVLRIPSAEGKQKA) are cytoplasmic. A helical transmembrane segment spans residues 254–274 (FTTCASHLTVVIIHFGFASIV). Residues 275–284 (YLKPEASGDD) lie on the Extracellular side of the membrane. Residues 285–305 (TLIAVPYTVITPFLSPIIFSL) form a helical membrane-spanning segment. Topologically, residues 306 to 326 (RNKDMKNAFRRMMGNTVALKK) are cytoplasmic.

This sequence belongs to the G-protein coupled receptor 1 family.

The protein localises to the cell membrane. In terms of biological role, odorant receptor. The protein is Olfactory receptor 10X1 (OR10X1) of Homo sapiens (Human).